A 344-amino-acid polypeptide reads, in one-letter code: Biotin synthase (344 aa).

Residues 40–267 (AEVQVSTLLS…KSMVRLSAGR (228 aa)) enclose the Radical SAM core domain. The [4Fe-4S] cluster site is built by C55, C59, and C62. The [2Fe-2S] cluster site is built by C99, C130, C190, and R262.

This sequence belongs to the radical SAM superfamily. Biotin synthase family. As to quaternary structure, homodimer. The cofactor is [4Fe-4S] cluster. It depends on [2Fe-2S] cluster as a cofactor.

The catalysed reaction is (4R,5S)-dethiobiotin + (sulfur carrier)-SH + 2 reduced [2Fe-2S]-[ferredoxin] + 2 S-adenosyl-L-methionine = (sulfur carrier)-H + biotin + 2 5'-deoxyadenosine + 2 L-methionine + 2 oxidized [2Fe-2S]-[ferredoxin]. It functions in the pathway cofactor biosynthesis; biotin biosynthesis; biotin from 7,8-diaminononanoate: step 2/2. In terms of biological role, catalyzes the conversion of dethiobiotin (DTB) to biotin by the insertion of a sulfur atom into dethiobiotin via a radical-based mechanism. This chain is Biotin synthase, found in Xanthomonas campestris pv. campestris (strain 8004).